The primary structure comprises 200 residues: Protein GrpE (200 aa).

Residues 1 to 23 (MEEEIKETSEDKEEENTEAEAVE) show a composition bias toward acidic residues. Residues 1-39 (MEEEIKETSEDKEEENTEAEAVENNEKSEENAGNVEEDE) form a disordered region.

This sequence belongs to the GrpE family. In terms of assembly, homodimer.

Its subcellular location is the cytoplasm. Its function is as follows. Participates actively in the response to hyperosmotic and heat shock by preventing the aggregation of stress-denatured proteins, in association with DnaK and GrpE. It is the nucleotide exchange factor for DnaK and may function as a thermosensor. Unfolded proteins bind initially to DnaJ; upon interaction with the DnaJ-bound protein, DnaK hydrolyzes its bound ATP, resulting in the formation of a stable complex. GrpE releases ADP from DnaK; ATP binding to DnaK triggers the release of the substrate protein, thus completing the reaction cycle. Several rounds of ATP-dependent interactions between DnaJ, DnaK and GrpE are required for fully efficient folding. This is Protein GrpE from Brachyspira hyodysenteriae (strain ATCC 49526 / WA1).